The following is a 350-amino-acid chain: D-alanine--D-alanine ligase (350 aa).

An ATP-grasp domain is found at 138–346 (KSAFSSAGLS…LEQLVHKLIQ (209 aa)). ATP is bound at residue 173-228 (ERELNYPCFVKPANLGSSVGISKVRSRQELEAGLEQAAALDPRLVVEQGVNAREVE). The Mg(2+) site is built by aspartate 299, glutamate 313, and asparagine 315.

Belongs to the D-alanine--D-alanine ligase family. The cofactor is Mg(2+). Mn(2+) is required as a cofactor.

The protein localises to the cytoplasm. It carries out the reaction 2 D-alanine + ATP = D-alanyl-D-alanine + ADP + phosphate + H(+). Its pathway is cell wall biogenesis; peptidoglycan biosynthesis. Functionally, cell wall formation. This chain is D-alanine--D-alanine ligase, found in Synechococcus sp. (strain CC9605).